The primary structure comprises 272 residues: Tumor necrosis factor receptor superfamily member 4 (272 aa).

Residues 1 to 19 form the signal peptide; the sequence is MYVWVQQPTALLLLALTLG. At 20 to 211 the chain is on the extracellular side; it reads VTARRLNCVK…PPTLVTPEGP (192 aa). 2 TNFR-Cys repeats span residues 26–61 and 62–103; these read NCVK…TLCH and PCET…DTVC. Cystine bridges form between cysteine 27–cysteine 38, cysteine 39–cysteine 52, cysteine 42–cysteine 60, cysteine 63–cysteine 77, cysteine 80–cysteine 95, cysteine 83–cysteine 103, cysteine 105–cysteine 123, and cysteine 126–cysteine 139. One copy of the TNFR-Cys 3; truncated repeat lies at 104–124; it reads RCRPGTQPRQDSGYKLGVDCV. The TNFR-Cys 4 repeat unit spans residues 125–165; sequence PCPPGHFSPGNNQACKPWTNCTLSGKQTRHPASDSLDAVCE. Asparagine 144 carries N-linked (GlcNAc...) asparagine glycosylation. A disulfide bond links cysteine 145 and cysteine 164. Residues 212–236 form a helical membrane-spanning segment; the sequence is AFAVLLGLGLGLLAPLTVLLALYLL. The Cytoplasmic portion of the chain corresponds to 237–272; it reads RKAWRLPNTPKPCWGNSFRTPIQEEHTDAHFTLAKI.

Interacts with TRAF2, TRAF3 and TRAF5. As to expression, expressed in CD4(+) T-cells and in T-helper Th17 cells (at protein level).

Its subcellular location is the membrane. Receptor for TNFSF4/OX40L/GP34. Is a costimulatory molecule implicated in long-term T-cell immunity. The sequence is that of Tumor necrosis factor receptor superfamily member 4 (Tnfrsf4) from Mus musculus (Mouse).